Here is a 173-residue protein sequence, read N- to C-terminus: Cytochrome c-type biogenesis protein CcmE (173 aa).

Residues 1–8 (MNPRRKSR) lie on the Cytoplasmic side of the membrane. A helical; Signal-anchor for type II membrane protein membrane pass occupies residues 9–29 (FKLVIFVVLGIAIASGLMLYA). Topologically, residues 30 to 173 (LRQNIDLFYT…RDRQEKEGAK (144 aa)) are periplasmic. Heme contacts are provided by His131 and Tyr135. Residues 139 to 173 (ELGEKMQKVHKPMGIKAADLKGESERDRQEKEGAK) form a disordered region. Residues 156–173 (ADLKGESERDRQEKEGAK) are compositionally biased toward basic and acidic residues.

The protein belongs to the CcmE/CycJ family.

Its subcellular location is the cell inner membrane. Heme chaperone required for the biogenesis of c-type cytochromes. Transiently binds heme delivered by CcmC and transfers the heme to apo-cytochromes in a process facilitated by CcmF and CcmH. This chain is Cytochrome c-type biogenesis protein CcmE, found in Haemophilus influenzae (strain 86-028NP).